A 136-amino-acid chain; its full sequence is Biopolymer transport protein exbD2 (136 aa).

Over 1-23 (MAFSTGGNRGPMADINVTPLVDV) the chain is Cytoplasmic. A helical transmembrane segment spans residues 24 to 44 (MLVLLIIFIVTAPIMTYPIAV). Residues 45–136 (DLPQRVLNPP…SQMKKIGFMQ (92 aa)) lie on the Periplasmic side of the membrane.

This sequence belongs to the ExbD/TolR family. The accessory proteins ExbB and ExbD seem to form a complex with TonB.

It is found in the cell inner membrane. Its function is as follows. Involved in the TonB-dependent energy-dependent transport of various receptor-bound substrates. The polypeptide is Biopolymer transport protein exbD2 (exbD2) (Xanthomonas campestris pv. campestris (strain ATCC 33913 / DSM 3586 / NCPPB 528 / LMG 568 / P 25)).